The following is a 470-amino-acid chain: Glutamate--tRNA ligase 1 (470 aa).

A 'HIGH' region motif is present at residues 8–18 (PSPTGYLHVGG). Residues 250-254 (KLSKR) carry the 'KMSKS' region motif. Lys253 provides a ligand contact to ATP.

It belongs to the class-I aminoacyl-tRNA synthetase family. Glutamate--tRNA ligase type 1 subfamily. As to quaternary structure, monomer.

The protein resides in the cytoplasm. The enzyme catalyses tRNA(Glu) + L-glutamate + ATP = L-glutamyl-tRNA(Glu) + AMP + diphosphate. Functionally, catalyzes the attachment of glutamate to tRNA(Glu) in a two-step reaction: glutamate is first activated by ATP to form Glu-AMP and then transferred to the acceptor end of tRNA(Glu). This chain is Glutamate--tRNA ligase 1, found in Pseudothermotoga lettingae (strain ATCC BAA-301 / DSM 14385 / NBRC 107922 / TMO) (Thermotoga lettingae).